Reading from the N-terminus, the 157-residue chain is Phosphopantetheine adenylyltransferase (157 aa).

It belongs to the eukaryotic CoaD family.

The protein resides in the cytoplasm. The enzyme catalyses (R)-4'-phosphopantetheine + ATP + H(+) = 3'-dephospho-CoA + diphosphate. It participates in cofactor biosynthesis; coenzyme A biosynthesis. Its function is as follows. Reversibly transfers an adenylyl group from ATP to 4'-phosphopantetheine, yielding dephospho-CoA (dPCoA) and pyrophosphate. The sequence is that of Phosphopantetheine adenylyltransferase from Methanopyrus kandleri (strain AV19 / DSM 6324 / JCM 9639 / NBRC 100938).